A 618-amino-acid polypeptide reads, in one-letter code: Putative UDP-glucuronate:xylan alpha-glucuronosyltransferase 3 (618 aa).

The chain crosses the membrane as a helical; Signal-anchor for type II membrane protein span at residues Gly-32 to Tyr-54. Positions 379 and 381 each coordinate Mn(2+). Substrate-binding positions include Asp-379–Asp-381, Asn-408–Gly-410, Asn-435–Gln-439, and His-489–Lys-495. His-489 contributes to the Mn(2+) binding site. Residues Thr-598–Ser-608 show a composition bias toward low complexity. The interval Thr-598 to Leu-618 is disordered.

This sequence belongs to the glycosyltransferase 8 family. Glycogenin subfamily. Requires Mn(2+) as cofactor.

It is found in the golgi apparatus membrane. May be involved in the substitutions of the xylan backbone in stem glucuronoxylan. In Arabidopsis thaliana (Mouse-ear cress), this protein is Putative UDP-glucuronate:xylan alpha-glucuronosyltransferase 3 (GUX3).